A 384-amino-acid chain; its full sequence is Cysteine protease ATG4B (384 aa).

Cysteine 74 serves as the catalytic Nucleophile. Active-site residues include aspartate 269 and histidine 271. An LIR motif is present at residues phenylalanine 379–leucine 382.

It belongs to the peptidase C54 family.

It is found in the cytoplasm. Its subcellular location is the cytosol. The protein resides in the cytoplasmic vesicle. It localises to the autophagosome. The protein localises to the endoplasmic reticulum. It is found in the mitochondrion. The catalysed reaction is [protein]-C-terminal L-amino acid-glycyl-phosphatidylethanolamide + H2O = [protein]-C-terminal L-amino acid-glycine + a 1,2-diacyl-sn-glycero-3-phosphoethanolamine. The enzyme catalyses [protein]-C-terminal L-amino acid-glycyl-phosphatidylserine + H2O = [protein]-C-terminal L-amino acid-glycine + a 1,2-diacyl-sn-glycero-3-phospho-L-serine. Functionally, cysteine protease that plays a key role in autophagy by mediating both proteolytic activation and delipidation of ATG8 family proteins. Required for canonical autophagy (macroautophagy), non-canonical autophagy as well as for mitophagy. The protease activity is required for proteolytic activation of ATG8 family proteins: cleaves the C-terminal amino acid of ATG8 proteins to reveal a C-terminal glycine. Exposure of the glycine at the C-terminus is essential for ATG8 proteins conjugation to phosphatidylethanolamine (PE) and insertion to membranes, which is necessary for autophagy. Protease activity is also required to counteract formation of high-molecular weight conjugates of ATG8 proteins (ATG8ylation): acts as a deubiquitinating-like enzyme that removes ATG8 conjugated to other proteins, such as ATG3. In addition to the protease activity, also mediates delipidation of ATG8 family proteins. Catalyzes delipidation of PE-conjugated forms of ATG8 proteins during macroautophagy. Also involved in non-canonical autophagy, a parallel pathway involving conjugation of ATG8 proteins to single membranes at endolysosomal compartments, by catalyzing delipidation of ATG8 proteins conjugated to phosphatidylserine (PS). This is Cysteine protease ATG4B from Xenopus laevis (African clawed frog).